Consider the following 429-residue polypeptide: MIELDINASDKSLSHRAVIFSLLAQKPCFVRNFLMGEDCLSSLEIAQNLGAKVENTAKNSFKITPPTAIKEPSKILNCNNSGTSMRLYSGLLSAQKGLFVLSGDNSLNARPMKRIIEPLKAFGARILGREDNHFAPLVIVGSPLKACNYESPIASAQVKSAFVLSALQAQGVSVYKENELSRNHTEIMLKSLGAKIHNQDGVLMISPLEKPLEAFDFTIANDPSSAFFFALACAITPKSRLLLKNVLLNPTRIEAFEALKKMGASIEYVIQSKDLEMIGDIYVEHAPLKAISIEQNIASLIDEIPALSIAMLFAKGKSMVKNAKDLRVKESDRIKAVISNFKALGIECEEFEDGFYIEGLEDISPLKQRFSQKKPPLIKSFNDHRIAMSFAILTLALPLEIDNLECANISFPQFKRLLNLFKKGSFNGN.

3 residues coordinate 3-phosphoshikimate: Lys-11, Ser-12, and Arg-16. Lys-11 is a binding site for phosphoenolpyruvate. Gly-82 and Arg-110 together coordinate phosphoenolpyruvate. Residues Ser-155, Gln-157, Asp-302, and Lys-329 each contribute to the 3-phosphoshikimate site. Gln-157 contributes to the phosphoenolpyruvate binding site. The active-site Proton acceptor is Asp-302. Phosphoenolpyruvate contacts are provided by Arg-333 and Arg-385.

The protein belongs to the EPSP synthase family. Monomer.

Its subcellular location is the cytoplasm. The enzyme catalyses 3-phosphoshikimate + phosphoenolpyruvate = 5-O-(1-carboxyvinyl)-3-phosphoshikimate + phosphate. It functions in the pathway metabolic intermediate biosynthesis; chorismate biosynthesis; chorismate from D-erythrose 4-phosphate and phosphoenolpyruvate: step 6/7. Catalyzes the transfer of the enolpyruvyl moiety of phosphoenolpyruvate (PEP) to the 5-hydroxyl of shikimate-3-phosphate (S3P) to produce enolpyruvyl shikimate-3-phosphate and inorganic phosphate. The sequence is that of 3-phosphoshikimate 1-carboxyvinyltransferase from Helicobacter pylori (strain HPAG1).